The chain runs to 63 residues: UPF0512 protein X (63 aa).

The protein belongs to the UPF0512 family.

This Dictyostelium discoideum (Social amoeba) protein is UPF0512 protein X.